Reading from the N-terminus, the 422-residue chain is Protein arginine methyltransferase NDUFAF7, mitochondrial (422 aa).

A mitochondrion-targeting transit peptide spans 1 to 28 (MRTLLRLKRLMPEVLWTKRSCSSSSINK).

It belongs to the NDUFAF7 family.

Its subcellular location is the mitochondrion. The enzyme catalyses L-arginyl-[protein] + 2 S-adenosyl-L-methionine = N(omega),N(omega)'-dimethyl-L-arginyl-[protein] + 2 S-adenosyl-L-homocysteine + 2 H(+). Its function is as follows. Arginine methyltransferase involved in the assembly or stability of mitochondrial NADH:ubiquinone oxidoreductase complex (complex I). Acts by mediating symmetric dimethylation of 'Arg-118' of ndufs2 after it assembles into the complex I, stabilizing the early intermediate complex. The chain is Protein arginine methyltransferase NDUFAF7, mitochondrial from Danio rerio (Zebrafish).